Here is a 631-residue protein sequence, read N- to C-terminus: MVSKLSQLQTELLAALLESGLSKEALIQALGEPGPYLLAGEGPLDKGESCGGGRGELAELPNGLGETRGSEDETDDDGEDFTPPILKELENLSPEEAAHQKAVVETLLQEDPWRVAKMVKSYLQQHNIPQREVVDTTGLNQSHLSQHLNKGTPMKTQKRAALYTWYVRKQREVAQQFTHAGQGGLIEEPTGDELPTKKGRRNRFKWGPASQQILFQAYERQKNPSKEERETLVEECNRAECIQRGVSPSQAQGLGSNLVTEVRVYNWFANRRKEEAFRHKLAMDTYSGPPPGPGPGPALPAHSSPGLPPPALSPSKVHGVRYGQPATSETAEVPSSSGGPLVTVSTPLHQVSPTGLEPSHSLLSTEAKLVSAAGGPLPPVSTLTALHSLEQTSPGLNQQPQNLIMASLPGVMTIGPGEPASLGPTFTNTGASTLVIGLASTQAQSVPVINSMGSSLTTLQPVQFSQPLHPSYQQPLMPPVQSHVTQSPFMATMAQLQSPHALYSHKPEVAQYTHTGLLPQTMLITDTTNLSALASLTPTKQVFTSDTEASSESGLHTPASQATTLHVPSQDPASIQHLQPAHRLSASPTVSSSSLVLYQSSDSSNGQSHLLPSNHSVIETFISTQMASSSQ.

The interval 1–31 (MVSKLSQLQTELLAALLESGLSKEALIQALG) is dimerization. Residues 1–32 (MVSKLSQLQTELLAALLESGLSKEALIQALGE) form the HNF-p1 domain. Residues 40 to 81 (GEGPLDKGESCGGGRGELAELPNGLGETRGSEDETDDDGEDF) are disordered. Serine 70 carries the phosphoserine modification. The residue at position 74 (threonine 74) is a Phosphothreonine. Residues 87–182 (KELENLSPEE…VAQQFTHAGQ (96 aa)) enclose the POU-specific atypical domain. Serine 93 bears the Phosphoserine mark. A Glycyl lysine isopeptide (Lys-Gly) (interchain with G-Cter in ubiquitin) cross-link involves residue lysine 117. Interaction with DNA regions lie at residues 130-132 (QRE), 143-149 (HLSQHLN), 155-158 (KTQK), and 203-206 (RFKW). A disordered region spans residues 183-205 (GGLIEEPTGDELPTKKGRRNRFK). A Nuclear localization signal motif is present at residues 197-205 (KKGRRNRFK). A DNA-binding region (homeobox; HNF1-type) is located at residues 199–279 (GRRNRFKWGP…NRRKEEAFRH (81 aa)). Serine 247 is modified (phosphoserine). Interaction with DNA stretches follow at residues 263–265 (RVY) and 270–273 (NRRK). Disordered regions lie at residues 283–358 (MDTY…GLEP) and 545–567 (SDTEASSESGLHTPASQATTLHV). A compositionally biased stretch (pro residues) spans 288-298 (GPPPGPGPGPA). Serine 313 is modified (phosphoserine). The segment covering 325-353 (PATSETAEVPSSSGGPLVTVSTPLHQVSP) has biased composition (polar residues).

The protein belongs to the HNF1 homeobox family. As to quaternary structure, binds DNA as a dimer. Heterotetramer with PCBD1; formed by a dimer of dimers. Interacts with PCBD1. Interacts with BHLHE41. Interacts with NR5A2. Interacts with SPOP; this interaction promotes ubiquitination and degradation of HNF1A. Post-translationally, ubiquitinated in s SPOP-dependent manner; leading to prteasomal degradation. In terms of tissue distribution, liver.

The protein localises to the nucleus. In terms of biological role, transcriptional activator that regulates the tissue specific expression of multiple genes, especially in pancreatic islet cells and in liver. Binds to the inverted palindrome 5'-GTTAATNATTAAC-3'. Activates the transcription of CYP1A2, CYP2E1 and CYP3A11. (Microbial infection) Plays a crucial role for hepatitis B virus gene transcription and DNA replication. Mechanistically, synergistically cooperates with NR5A2 to up-regulate the activity of one of the critical cis-elements in the hepatitis B virus genome enhancer II (ENII). This Homo sapiens (Human) protein is Hepatocyte nuclear factor 1-alpha (HNF1A).